A 341-amino-acid chain; its full sequence is DNA-directed RNA polymerase subunit alpha (341 aa).

The tract at residues 1–233 (MVREEVPVST…DLFIPFLHAE (233 aa)) is alpha N-terminal domain (alpha-NTD). The tract at residues 266–341 (IILKRIFIDQ…LKNSNQFESR (76 aa)) is alpha C-terminal domain (alpha-CTD).

This sequence belongs to the RNA polymerase alpha chain family. In terms of assembly, in plastids the minimal PEP RNA polymerase catalytic core is composed of four subunits: alpha, beta, beta', and beta''. When a (nuclear-encoded) sigma factor is associated with the core the holoenzyme is formed, which can initiate transcription.

Its subcellular location is the plastid. The protein resides in the chloroplast. The catalysed reaction is RNA(n) + a ribonucleoside 5'-triphosphate = RNA(n+1) + diphosphate. Functionally, DNA-dependent RNA polymerase catalyzes the transcription of DNA into RNA using the four ribonucleoside triphosphates as substrates. This chain is DNA-directed RNA polymerase subunit alpha, found in Nymphaea alba (White water-lily).